A 288-amino-acid chain; its full sequence is tRNA-cytidine(32) 2-sulfurtransferase (288 aa).

The PP-loop motif motif lies at 70–75; it reads SGGKDS. 3 residues coordinate [4Fe-4S] cluster: Cys145, Cys148, and Cys236.

It belongs to the TtcA family. In terms of assembly, homodimer. It depends on Mg(2+) as a cofactor. [4Fe-4S] cluster serves as cofactor.

The protein resides in the cytoplasm. It catalyses the reaction cytidine(32) in tRNA + S-sulfanyl-L-cysteinyl-[cysteine desulfurase] + AH2 + ATP = 2-thiocytidine(32) in tRNA + L-cysteinyl-[cysteine desulfurase] + A + AMP + diphosphate + H(+). It functions in the pathway tRNA modification. Its function is as follows. Catalyzes the ATP-dependent 2-thiolation of cytidine in position 32 of tRNA, to form 2-thiocytidine (s(2)C32). The sulfur atoms are provided by the cysteine/cysteine desulfurase (IscS) system. The chain is tRNA-cytidine(32) 2-sulfurtransferase from Bartonella tribocorum (strain CIP 105476 / IBS 506).